The chain runs to 856 residues: DNA mismatch repair protein MutS (856 aa).

Position 605–612 (605–612) interacts with ATP; it reads GPNMSGKS.

Belongs to the DNA mismatch repair MutS family.

In terms of biological role, this protein is involved in the repair of mismatches in DNA. It is possible that it carries out the mismatch recognition step. This protein has a weak ATPase activity. This Lysinibacillus sphaericus (strain C3-41) protein is DNA mismatch repair protein MutS.